Consider the following 194-residue polypeptide: Glycerol-3-phosphate acyltransferase (194 aa).

Transmembrane regions (helical) follow at residues 2-22 (LIEI…TGLL), 51-71 (SVGI…VLAA), 80-100 (WIAL…FLGF), 112-132 (VFLG…VAVV), and 155-175 (FLSG…LVIW).

Belongs to the PlsY family. In terms of assembly, probably interacts with PlsX.

Its subcellular location is the cell inner membrane. The catalysed reaction is an acyl phosphate + sn-glycerol 3-phosphate = a 1-acyl-sn-glycero-3-phosphate + phosphate. It participates in lipid metabolism; phospholipid metabolism. In terms of biological role, catalyzes the transfer of an acyl group from acyl-phosphate (acyl-PO(4)) to glycerol-3-phosphate (G3P) to form lysophosphatidic acid (LPA). This enzyme utilizes acyl-phosphate as fatty acyl donor, but not acyl-CoA or acyl-ACP. The polypeptide is Glycerol-3-phosphate acyltransferase (Geobacter metallireducens (strain ATCC 53774 / DSM 7210 / GS-15)).